Reading from the N-terminus, the 341-residue chain is Mitochondrial protein C2orf69 homolog (341 aa).

Residues 1-35 (MLQVVQSPHNLVFMGSIRSVVACLSLAAVARKMTA) constitute a mitochondrion transit peptide.

This sequence belongs to the C2orf69 family.

It localises to the mitochondrion matrix. May play a role in the respiratory chain. This chain is Mitochondrial protein C2orf69 homolog, found in Danio rerio (Zebrafish).